Here is a 515-residue protein sequence, read N- to C-terminus: ATP synthase subunit alpha (515 aa).

171–178 (GDRQTGKT) serves as a coordination point for ATP.

The protein belongs to the ATPase alpha/beta chains family. F-type ATPases have 2 components, CF(1) - the catalytic core - and CF(0) - the membrane proton channel. CF(1) has five subunits: alpha(3), beta(3), gamma(1), delta(1), epsilon(1). CF(0) has three main subunits: a(1), b(2) and c(9-12). The alpha and beta chains form an alternating ring which encloses part of the gamma chain. CF(1) is attached to CF(0) by a central stalk formed by the gamma and epsilon chains, while a peripheral stalk is formed by the delta and b chains.

The protein resides in the cell inner membrane. It carries out the reaction ATP + H2O + 4 H(+)(in) = ADP + phosphate + 5 H(+)(out). Functionally, produces ATP from ADP in the presence of a proton gradient across the membrane. The alpha chain is a regulatory subunit. This is ATP synthase subunit alpha from Xylella fastidiosa (strain M12).